A 421-amino-acid polypeptide reads, in one-letter code: Histidine--tRNA ligase (421 aa).

It belongs to the class-II aminoacyl-tRNA synthetase family. As to quaternary structure, homodimer.

It localises to the cytoplasm. The catalysed reaction is tRNA(His) + L-histidine + ATP = L-histidyl-tRNA(His) + AMP + diphosphate + H(+). This Francisella tularensis subsp. holarctica (strain OSU18) protein is Histidine--tRNA ligase.